A 173-amino-acid polypeptide reads, in one-letter code: 6,7-dimethyl-8-ribityllumazine synthase (173 aa).

Residues phenylalanine 24, 58-60 (ALE), and 82-84 (AVI) each bind 5-amino-6-(D-ribitylamino)uracil. A (2S)-2-hydroxy-3-oxobutyl phosphate-binding site is contributed by 87-88 (ET). Histidine 90 functions as the Proton donor in the catalytic mechanism. Residue asparagine 115 coordinates 5-amino-6-(D-ribitylamino)uracil. Arginine 129 contributes to the (2S)-2-hydroxy-3-oxobutyl phosphate binding site. The interval 150 to 173 (ALEPEEDDEDDEDEDFDDEEDDGR) is disordered. The segment covering 152 to 173 (EPEEDDEDDEDEDFDDEEDDGR) has biased composition (acidic residues).

The protein belongs to the DMRL synthase family.

It catalyses the reaction (2S)-2-hydroxy-3-oxobutyl phosphate + 5-amino-6-(D-ribitylamino)uracil = 6,7-dimethyl-8-(1-D-ribityl)lumazine + phosphate + 2 H2O + H(+). The protein operates within cofactor biosynthesis; riboflavin biosynthesis; riboflavin from 2-hydroxy-3-oxobutyl phosphate and 5-amino-6-(D-ribitylamino)uracil: step 1/2. In terms of biological role, catalyzes the formation of 6,7-dimethyl-8-ribityllumazine by condensation of 5-amino-6-(D-ribitylamino)uracil with 3,4-dihydroxy-2-butanone 4-phosphate. This is the penultimate step in the biosynthesis of riboflavin. In Bordetella pertussis (strain Tohama I / ATCC BAA-589 / NCTC 13251), this protein is 6,7-dimethyl-8-ribityllumazine synthase.